The sequence spans 563 residues: Tripeptidyl-peptidase 1 (563 aa).

A signal peptide spans 1-19 (MGLQACLLGLFALILSGKC). Residues 20 to 195 (SYSPEPDQRR…PEPQVTGTVG (176 aa)) constitute a propeptide, removed in mature form. Cys-111 and Cys-122 are disulfide-bonded. The Peptidase S53 domain maps to 199-563 (GVTPSVIRKR…PALLKTLLNP (365 aa)). N-linked (GlcNAc...) asparagine glycosylation is found at Asn-210 and Asn-222. Residues Glu-272 and Asp-276 each act as charge relay system in the active site. N-linked (GlcNAc...) asparagine glycosylation is found at Asn-286, Asn-313, and Asn-443. Intrachain disulfides connect Cys-365/Cys-526 and Cys-522/Cys-537. Ser-475 (charge relay system) is an active-site residue. Asp-517 and Val-518 together coordinate Ca(2+). Gly-539, Gly-541, and Asp-543 together coordinate Ca(2+).

As to quaternary structure, monomer. Interacts with CLN5. Interacts with CLN3. Ca(2+) serves as cofactor. Activated by autocatalytic proteolytical processing upon acidification. N-glycosylation is required for processing and activity.

It is found in the lysosome. The protein localises to the melanosome. It carries out the reaction Release of an N-terminal tripeptide from a polypeptide, but also has endopeptidase activity.. Functionally, lysosomal serine protease with tripeptidyl-peptidase I activity. May act as a non-specific lysosomal peptidase which generates tripeptides from the breakdown products produced by lysosomal proteinases. Requires substrates with an unsubstituted N-terminus. This is Tripeptidyl-peptidase 1 (TPP1) from Pan troglodytes (Chimpanzee).